A 235-amino-acid chain; its full sequence is Enolase-phosphatase E1 (235 aa).

This sequence belongs to the HAD-like hydrolase superfamily. MasA/MtnC family. Monomer. Mg(2+) serves as cofactor.

It catalyses the reaction 5-methylsulfanyl-2,3-dioxopentyl phosphate + H2O = 1,2-dihydroxy-5-(methylsulfanyl)pent-1-en-3-one + phosphate. It functions in the pathway amino-acid biosynthesis; L-methionine biosynthesis via salvage pathway; L-methionine from S-methyl-5-thio-alpha-D-ribose 1-phosphate: step 3/6. It participates in amino-acid biosynthesis; L-methionine biosynthesis via salvage pathway; L-methionine from S-methyl-5-thio-alpha-D-ribose 1-phosphate: step 4/6. Its function is as follows. Bifunctional enzyme that catalyzes the enolization of 2,3-diketo-5-methylthiopentyl-1-phosphate (DK-MTP-1-P) into the intermediate 2-hydroxy-3-keto-5-methylthiopentenyl-1-phosphate (HK-MTPenyl-1-P), which is then dephosphorylated to form the acireductone 1,2-dihydroxy-3-keto-5-methylthiopentene (DHK-MTPene). This is Enolase-phosphatase E1 from Parvibaculum lavamentivorans (strain DS-1 / DSM 13023 / NCIMB 13966).